Consider the following 198-residue polypeptide: uncharacterized protein (198 aa).

The segment at 9 to 43 (CPVCGGKGTFVITSHQIDIPYFGPVLETTMICEKC) adopts a C4-type zinc-finger fold.

It belongs to the ZPR1 family.

This is an uncharacterized protein from Methanocaldococcus jannaschii (strain ATCC 43067 / DSM 2661 / JAL-1 / JCM 10045 / NBRC 100440) (Methanococcus jannaschii).